The sequence spans 261 residues: Probable membrane transporter protein XF_0764 (261 aa).

Transmembrane regions (helical) follow at residues 6-26, 29-49, 78-98, 99-119, 150-170, 175-195, 205-225, and 239-259; these read LIVT…LGGG, ILAT…IAIG, VIFA…GMLI, DGQR…LLML, AASG…LIFA, TINA…ITTL, WTIA…GTLL, and VFGL…WASL.

It belongs to the 4-toluene sulfonate uptake permease (TSUP) (TC 2.A.102) family.

It is found in the cell membrane. The sequence is that of Probable membrane transporter protein XF_0764 from Xylella fastidiosa (strain 9a5c).